Here is a 298-residue protein sequence, read N- to C-terminus: Protoheme IX farnesyltransferase 1 (298 aa).

The next 9 membrane-spanning stretches (helical) occupy residues 21–41 (QVWW…INSF), 43–63 (SYLI…SMGA), 94–114 (KGAF…LLIF), 118–138 (LAAL…SYLL), 144–164 (YSII…WYTV), 168–188 (FSWI…VHVW), 215–235 (TAVS…IPYF), 236–256 (LGFF…PIVI), and 274–294 (FIYT…IHII).

It belongs to the UbiA prenyltransferase family. Protoheme IX farnesyltransferase subfamily.

Its subcellular location is the cell membrane. It carries out the reaction heme b + (2E,6E)-farnesyl diphosphate + H2O = Fe(II)-heme o + diphosphate. Its pathway is porphyrin-containing compound metabolism; heme O biosynthesis; heme O from protoheme: step 1/1. Converts heme B (protoheme IX) to heme O by substitution of the vinyl group on carbon 2 of heme B porphyrin ring with a hydroxyethyl farnesyl side group. The sequence is that of Protoheme IX farnesyltransferase 1 from Picrophilus torridus (strain ATCC 700027 / DSM 9790 / JCM 10055 / NBRC 100828 / KAW 2/3).